A 421-amino-acid chain; its full sequence is Serine--tRNA ligase (421 aa).

231–233 (TAE) contacts L-serine. 262–264 (RRE) contacts ATP. Residue Glu285 participates in L-serine binding. 349–352 (EISS) contributes to the ATP binding site. Ser384 is a binding site for L-serine.

The protein belongs to the class-II aminoacyl-tRNA synthetase family. Type-1 seryl-tRNA synthetase subfamily. As to quaternary structure, homodimer. The tRNA molecule binds across the dimer.

The protein resides in the cytoplasm. It catalyses the reaction tRNA(Ser) + L-serine + ATP = L-seryl-tRNA(Ser) + AMP + diphosphate + H(+). The enzyme catalyses tRNA(Sec) + L-serine + ATP = L-seryl-tRNA(Sec) + AMP + diphosphate + H(+). It participates in aminoacyl-tRNA biosynthesis; selenocysteinyl-tRNA(Sec) biosynthesis; L-seryl-tRNA(Sec) from L-serine and tRNA(Sec): step 1/1. Its function is as follows. Catalyzes the attachment of serine to tRNA(Ser). Is also able to aminoacylate tRNA(Sec) with serine, to form the misacylated tRNA L-seryl-tRNA(Sec), which will be further converted into selenocysteinyl-tRNA(Sec). The protein is Serine--tRNA ligase of Hydrogenobaculum sp. (strain Y04AAS1).